Here is a 275-residue protein sequence, read N- to C-terminus: 2,3,4,5-tetrahydropyridine-2,6-dicarboxylate N-succinyltransferase (275 aa).

This sequence belongs to the transferase hexapeptide repeat family.

The protein localises to the cytoplasm. The enzyme catalyses (S)-2,3,4,5-tetrahydrodipicolinate + succinyl-CoA + H2O = (S)-2-succinylamino-6-oxoheptanedioate + CoA. Its pathway is amino-acid biosynthesis; L-lysine biosynthesis via DAP pathway; LL-2,6-diaminopimelate from (S)-tetrahydrodipicolinate (succinylase route): step 1/3. The sequence is that of 2,3,4,5-tetrahydropyridine-2,6-dicarboxylate N-succinyltransferase from Burkholderia multivorans (strain ATCC 17616 / 249).